Consider the following 157-residue polypeptide: Small ribosomal subunit protein uS7 (157 aa).

This sequence belongs to the universal ribosomal protein uS7 family. Part of the 30S ribosomal subunit. Contacts proteins S9 and S11.

Functionally, one of the primary rRNA binding proteins, it binds directly to 16S rRNA where it nucleates assembly of the head domain of the 30S subunit. Is located at the subunit interface close to the decoding center, probably blocks exit of the E-site tRNA. The protein is Small ribosomal subunit protein uS7 of Stenotrophomonas maltophilia (strain R551-3).